The sequence spans 330 residues: Aspartate--ammonia ligase (330 aa).

The protein belongs to the class-II aminoacyl-tRNA synthetase family. AsnA subfamily. As to quaternary structure, homodimer.

It is found in the cytoplasm. The catalysed reaction is L-aspartate + NH4(+) + ATP = L-asparagine + AMP + diphosphate + H(+). Its pathway is amino-acid biosynthesis; L-asparagine biosynthesis; L-asparagine from L-aspartate (ammonia route): step 1/1. The polypeptide is Aspartate--ammonia ligase (Salmonella typhi).